The sequence spans 158 residues: Pyruvoyl-dependent arginine decarboxylase (158 aa).

S44 carries the pyruvic acid (Ser) modification.

Belongs to the PdaD family. Pyruvate is required as a cofactor.

It catalyses the reaction L-arginine + H(+) = agmatine + CO2. The polypeptide is Pyruvoyl-dependent arginine decarboxylase (Pyrococcus horikoshii (strain ATCC 700860 / DSM 12428 / JCM 9974 / NBRC 100139 / OT-3)).